A 227-amino-acid chain; its full sequence is Ribosomal RNA large subunit methyltransferase E (227 aa).

Gly-78, Trp-80, Asp-103, Asp-119, and Asp-143 together coordinate S-adenosyl-L-methionine. The Proton acceptor role is filled by Lys-183.

It belongs to the class I-like SAM-binding methyltransferase superfamily. RNA methyltransferase RlmE family.

The protein resides in the cytoplasm. It catalyses the reaction uridine(2552) in 23S rRNA + S-adenosyl-L-methionine = 2'-O-methyluridine(2552) in 23S rRNA + S-adenosyl-L-homocysteine + H(+). Its function is as follows. Specifically methylates the uridine in position 2552 of 23S rRNA at the 2'-O position of the ribose in the fully assembled 50S ribosomal subunit. This Rickettsia conorii (strain ATCC VR-613 / Malish 7) protein is Ribosomal RNA large subunit methyltransferase E.